The primary structure comprises 314 residues: uncharacterized protein (314 aa).

Positions 1-24 are cleaved as a signal peptide; that stretch reads MKRRRRWRGWLLFPALCFCLLCEA. N-linked (GlcNAc...) asparagine; by host glycans are attached at residues N28, N43, N57, N77, N101, N102, N109, N151, N170, N217, N223, N252, N255, and N268. Low complexity predominate over residues 47 to 114; sequence ATTGTTTTSP…TIGTNATSPS (68 aa). A disordered region spans residues 47 to 116; the sequence is ATTGTTTTSP…GTNATSPSPS (70 aa).

The protein belongs to the HHV-5 UL116 protein family. In terms of assembly, interacts with gH. Interacts with UL148. In terms of processing, highly glycosylated.

Its subcellular location is the virion. It is found in the host endoplasmic reticulum. Its function is as follows. Chaperone protein that cooperates with UL148 to regulate the abundance of gH complexes in virion. First interactor of gH in the host endoplasmic reticulum, regulates the early folding steps of virion assembly. Then, UL148 is recruited and favors the binding of gL. This is an uncharacterized protein from Homo sapiens (Human).